Reading from the N-terminus, the 439-residue chain is Diaminopimelate decarboxylase (439 aa).

Residue K66 is modified to N6-(pyridoxal phosphate)lysine. Residues G248 and 290 to 293 each bind pyridoxal 5'-phosphate; that span reads EPGR. R293, R330, and Y334 together coordinate substrate. Residue C361 is the Proton donor of the active site. Substrate-binding residues include E362 and Y390. Y390 is a binding site for pyridoxal 5'-phosphate.

The protein belongs to the Orn/Lys/Arg decarboxylase class-II family. LysA subfamily. In terms of assembly, homodimer. Pyridoxal 5'-phosphate is required as a cofactor.

It carries out the reaction meso-2,6-diaminopimelate + H(+) = L-lysine + CO2. It functions in the pathway amino-acid biosynthesis; L-lysine biosynthesis via DAP pathway; L-lysine from DL-2,6-diaminopimelate: step 1/1. Functionally, specifically catalyzes the decarboxylation of meso-diaminopimelate (meso-DAP) to L-lysine. The protein is Diaminopimelate decarboxylase of Bacillus subtilis (strain 168).